Reading from the N-terminus, the 1007-residue chain is Protein vav-1 (1007 aa).

The region spanning 37–151 is the Calponin-homology (CH) domain; that stretch reads CDLWIGCARW…TLSFLSHTKE (115 aa). The interval 151–239 is AC; that stretch reads ESLSRGVDPF…ENDLQNTPTL (89 aa). Residues 153–176 form a disordered region; sequence LSRGVDPFPDTDNNQEGTSNGSEF. A compositionally biased stretch (polar residues) spans 163–174; sequence TDNNQEGTSNGS. Phosphotyrosine is present on residues Y183, Y200, and Y217. In terms of domain architecture, DH spans 240 to 437; that stretch reads KRNRCIRELY…EDVCNYINEE (198 aa). Residues 470–598 enclose the PH domain; that stretch reads RVNLDGEVKM…WMTALLLSKS (129 aa). The segment at 610–664 adopts a Phorbol-ester/DAG-type zinc-finger fold; that stretch reads NHKVAFHSFRVDVKNPATCDVCDKLMKGLQYQGYKCESCNMSMHKECLGLKKCEA. In terms of domain architecture, SH3 1 spans 688–750; that stretch reads HEGDIVVANS…HLDHVSQSRT (63 aa). The interval 778-817 is disordered; sequence LPNKLLSDGSSRSLSGPHGSRSSRNSSSSTINGSMDSVPR. The span at 782-814 shows a compositional bias: low complexity; the sequence is LLSDGSSRSLSGPHGSRSSRNSSSSTINGSMDS. Positions 831–925 constitute an SH2 domain; it reads WYMGEMERAK…ALDTCLKNPY (95 aa). Positions 926 to 991 constitute an SH3 2 domain; it reads SQCKVFKAVH…PLSYVKPYDP (66 aa).

In terms of processing, GEF activity is regulated by phosphorylation on tyrosine residues. As to expression, strong expression in the pharynx, proximal gonad, spermatheca, intestine and rectal epithelia.

Its function is as follows. Acts as a guanine nucleotide exchange factor (GEF) for Rho GTPase. Has a critical roles in the generation of rhythmic behaviors: feeding, defecation and ovulation by dynamically regulating the concentration of intracellular calcium. Plays a role in male tail tip morphogenesis. In Caenorhabditis elegans, this protein is Protein vav-1.